The primary structure comprises 694 residues: ATP-dependent RNA helicase DHX33 (694 aa).

The 169-residue stretch at 78 to 246 (LKELEANDTV…FNCKGMYLEG (169 aa)) folds into the Helicase ATP-binding domain. Residue 91-98 (SETGSGKT) participates in ATP binding. The DEAH box signature appears at 188-191 (DEAH). In terms of domain architecture, Helicase C-terminal spans 270–443 (TLFHIHRTTP…SMVLQLLALD (174 aa)).

This sequence belongs to the DEAD box helicase family. DEAH subfamily.

It is found in the nucleus. The protein localises to the nucleolus. It catalyses the reaction ATP + H2O = ADP + phosphate + H(+). Part of a translational control module, also containing pths/DDX47 and ais/DDX52, which coordinates germline stem cell differentiation with ribosome biogenesis during oogenesis. This module allows for coregulation of ribosomal proteins and non1/GTPBP4, a p53 repressor, preventing p53 stabilization, cell cycle arrest and loss of stem cell differentiation. The polypeptide is ATP-dependent RNA helicase DHX33 (Drosophila melanogaster (Fruit fly)).